The sequence spans 326 residues: Siroheme decarboxylase NirDL subunit (326 aa).

It belongs to the Ahb/Nir family. As to quaternary structure, forms a complex composed of NirDL, NirG and NirH. All proteins are required for the total conversion of siroheme to didecarboxysiroheme.

It carries out the reaction siroheme + 2 H(+) = 12,18-didecarboxysiroheme + 2 CO2. Its pathway is porphyrin-containing compound metabolism. Functionally, involved in heme d1 biosynthesis. Catalyzes the decarboxylation of siroheme into didecarboxysiroheme. Siroheme is probably decarboxylated to monodecarboxysiroheme, which is in turn decarboxylated to didecarboxysiroheme. This Paracoccus pantotrophus (Thiosphaera pantotropha) protein is Siroheme decarboxylase NirDL subunit.